A 494-amino-acid polypeptide reads, in one-letter code: Alpha-amylase-related protein (494 aa).

Residues 1 to 20 (MFKFAAAVILCLVAASSTLA) form the signal peptide. Gln21 bears the Pyrrolidone carboxylic acid mark. The cysteines at positions 48 and 104 are disulfide-linked. Ca(2+)-binding residues include Asn118, Gln169, and Asp178. Cysteines 157 and 171 form a disulfide. Arg206 is a chloride binding site. Asp208 acts as the Nucleophile in catalysis. His212 serves as a coordination point for Ca(2+). Catalysis depends on Glu245, which acts as the Proton donor. Chloride contacts are provided by Asn308 and Arg343. 3 disulfides stabilise this stretch: Cys376-Cys382, Cys418-Cys441, and Cys448-Cys460.

It belongs to the glycosyl hydrolase 13 family. In terms of assembly, monomer. It depends on Ca(2+) as a cofactor. Requires chloride as cofactor.

Its subcellular location is the secreted. It carries out the reaction Endohydrolysis of (1-&gt;4)-alpha-D-glucosidic linkages in polysaccharides containing three or more (1-&gt;4)-alpha-linked D-glucose units.. The chain is Alpha-amylase-related protein (Amyrel) from Drosophila atripex (Fruit fly).